The primary structure comprises 678 residues: Exoribonuclease 2 (678 aa).

An RNB domain is found at 193–521 (REDLTALPFV…INHRLLKAHI (329 aa)). The S1 motif domain maps to 568 to 650 (ETRFQAEIFD…ENRSLVGKPT (83 aa)). The segment at 659-678 (ETQTSAEQPAEGAENNEPQV) is disordered.

It belongs to the RNR ribonuclease family. RNase II subfamily.

Its subcellular location is the cytoplasm. The enzyme catalyses Exonucleolytic cleavage in the 3'- to 5'-direction to yield nucleoside 5'-phosphates.. Its function is as follows. Involved in mRNA degradation. Hydrolyzes single-stranded polyribonucleotides processively in the 3' to 5' direction. In Vibrio cholerae serotype O1 (strain ATCC 39315 / El Tor Inaba N16961), this protein is Exoribonuclease 2.